The following is a 336-amino-acid chain: Anthranilate phosphoribosyltransferase (336 aa).

5-phospho-alpha-D-ribose 1-diphosphate is bound by residues Gly-79, 82 to 83, Thr-87, 89 to 92, 107 to 115, and Ser-119; these read GD, NIST, and KHGNRAMSS. Gly-79 serves as a coordination point for anthranilate. Ser-91 contributes to the Mg(2+) binding site. Residue Asn-110 participates in anthranilate binding. Residue Arg-165 participates in anthranilate binding. The Mg(2+) site is built by Asp-225 and Glu-226.

It belongs to the anthranilate phosphoribosyltransferase family. In terms of assembly, homodimer. Mg(2+) serves as cofactor.

It catalyses the reaction N-(5-phospho-beta-D-ribosyl)anthranilate + diphosphate = 5-phospho-alpha-D-ribose 1-diphosphate + anthranilate. It participates in amino-acid biosynthesis; L-tryptophan biosynthesis; L-tryptophan from chorismate: step 2/5. Functionally, catalyzes the transfer of the phosphoribosyl group of 5-phosphorylribose-1-pyrophosphate (PRPP) to anthranilate to yield N-(5'-phosphoribosyl)-anthranilate (PRA). This is Anthranilate phosphoribosyltransferase from Dictyoglomus thermophilum (strain ATCC 35947 / DSM 3960 / H-6-12).